The chain runs to 438 residues: Serine hydroxymethyltransferase (438 aa).

(6S)-5,6,7,8-tetrahydrofolate-binding positions include L133 and 137-139; that span reads GHL. K242 bears the N6-(pyridoxal phosphate)lysine mark.

The protein belongs to the SHMT family. As to quaternary structure, homodimer. The cofactor is pyridoxal 5'-phosphate.

Its subcellular location is the cytoplasm. It carries out the reaction (6R)-5,10-methylene-5,6,7,8-tetrahydrofolate + glycine + H2O = (6S)-5,6,7,8-tetrahydrofolate + L-serine. It participates in one-carbon metabolism; tetrahydrofolate interconversion. It functions in the pathway amino-acid biosynthesis; glycine biosynthesis; glycine from L-serine: step 1/1. Functionally, catalyzes the reversible interconversion of serine and glycine with tetrahydrofolate (THF) serving as the one-carbon carrier. This reaction serves as the major source of one-carbon groups required for the biosynthesis of purines, thymidylate, methionine, and other important biomolecules. Also exhibits THF-independent aldolase activity toward beta-hydroxyamino acids, producing glycine and aldehydes, via a retro-aldol mechanism. This chain is Serine hydroxymethyltransferase, found in Brucella abortus (strain S19).